The chain runs to 284 residues: 2-dehydro-3-deoxyphosphooctonate aldolase (284 aa).

The protein belongs to the KdsA family.

The protein localises to the cytoplasm. The catalysed reaction is D-arabinose 5-phosphate + phosphoenolpyruvate + H2O = 3-deoxy-alpha-D-manno-2-octulosonate-8-phosphate + phosphate. It participates in carbohydrate biosynthesis; 3-deoxy-D-manno-octulosonate biosynthesis; 3-deoxy-D-manno-octulosonate from D-ribulose 5-phosphate: step 2/3. Its pathway is bacterial outer membrane biogenesis; lipopolysaccharide biosynthesis. The polypeptide is 2-dehydro-3-deoxyphosphooctonate aldolase (Escherichia coli O6:H1 (strain CFT073 / ATCC 700928 / UPEC)).